Here is a 236-residue protein sequence, read N- to C-terminus: Ribonuclease 3 (236 aa).

The 123-residue stretch at 8–130 (FRRLSQALDY…TFAAVSFDAD (123 aa)) folds into the RNase III domain. E43 provides a ligand contact to Mg(2+). D47 is a catalytic residue. 2 residues coordinate Mg(2+): D116 and E119. E119 is a catalytic residue. One can recognise a DRBM domain in the interval 157-227 (DAKTRLQEAL…AEAALTLLEQ (71 aa)).

Belongs to the ribonuclease III family. In terms of assembly, homodimer. Mg(2+) serves as cofactor.

It localises to the cytoplasm. It carries out the reaction Endonucleolytic cleavage to 5'-phosphomonoester.. In terms of biological role, digests double-stranded RNA. Involved in the processing of primary rRNA transcript to yield the immediate precursors to the large and small rRNAs (23S and 16S). Processes some mRNAs, and tRNAs when they are encoded in the rRNA operon. Processes pre-crRNA and tracrRNA of type II CRISPR loci if present in the organism. The polypeptide is Ribonuclease 3 (Chromobacterium violaceum (strain ATCC 12472 / DSM 30191 / JCM 1249 / CCUG 213 / NBRC 12614 / NCIMB 9131 / NCTC 9757 / MK)).